The primary structure comprises 246 residues: uncharacterized protein (246 aa).

This is an uncharacterized protein from Campylobacter jejuni subsp. jejuni serotype O:2 (strain ATCC 700819 / NCTC 11168).